A 102-amino-acid polypeptide reads, in one-letter code: Integration host factor subunit beta (102 aa).

The interval H54 to Q102 is disordered. The span at P82–N91 shows a compositional bias: basic and acidic residues. Residues S93–Q102 show a composition bias toward polar residues.

Belongs to the bacterial histone-like protein family. In terms of assembly, heterodimer of an alpha and a beta chain.

Functionally, this protein is one of the two subunits of integration host factor, a specific DNA-binding protein that functions in genetic recombination as well as in transcriptional and translational control. This chain is Integration host factor subunit beta, found in Halorhodospira halophila (strain DSM 244 / SL1) (Ectothiorhodospira halophila (strain DSM 244 / SL1)).